The primary structure comprises 166 residues: Crossover junction endodeoxyribonuclease RuvC (166 aa).

Catalysis depends on residues Asp-7, Glu-67, and Asp-140. Mg(2+) is bound by residues Asp-7, Glu-67, and Asp-140.

This sequence belongs to the RuvC family. As to quaternary structure, homodimer which binds Holliday junction (HJ) DNA. The HJ becomes 2-fold symmetrical on binding to RuvC with unstacked arms; it has a different conformation from HJ DNA in complex with RuvA. In the full resolvosome a probable DNA-RuvA(4)-RuvB(12)-RuvC(2) complex forms which resolves the HJ. Requires Mg(2+) as cofactor.

It is found in the cytoplasm. The enzyme catalyses Endonucleolytic cleavage at a junction such as a reciprocal single-stranded crossover between two homologous DNA duplexes (Holliday junction).. The RuvA-RuvB-RuvC complex processes Holliday junction (HJ) DNA during genetic recombination and DNA repair. Endonuclease that resolves HJ intermediates. Cleaves cruciform DNA by making single-stranded nicks across the HJ at symmetrical positions within the homologous arms, yielding a 5'-phosphate and a 3'-hydroxyl group; requires a central core of homology in the junction. The consensus cleavage sequence is 5'-(A/T)TT(C/G)-3'. Cleavage occurs on the 3'-side of the TT dinucleotide at the point of strand exchange. HJ branch migration catalyzed by RuvA-RuvB allows RuvC to scan DNA until it finds its consensus sequence, where it cleaves and resolves the cruciform DNA. The sequence is that of Crossover junction endodeoxyribonuclease RuvC from Brevibacillus brevis (strain 47 / JCM 6285 / NBRC 100599).